Reading from the N-terminus, the 1111-residue chain is RecBCD enzyme subunit RecC (1111 aa).

The protein belongs to the RecC family. Heterotrimer of RecB, RecC and RecD. All subunits contribute to DNA-binding.

Functionally, a helicase/nuclease that prepares dsDNA breaks (DSB) for recombinational DNA repair. Binds to DSBs and unwinds DNA via a highly rapid and processive ATP-dependent bidirectional helicase activity. Unwinds dsDNA until it encounters a Chi (crossover hotspot instigator) sequence from the 3' direction. Cuts ssDNA a few nucleotides 3' to the Chi site. The properties and activities of the enzyme are changed at Chi. The Chi-altered holoenzyme produces a long 3'-ssDNA overhang and facilitates RecA-binding to the ssDNA for homologous DNA recombination and repair. Holoenzyme degrades any linearized DNA that is unable to undergo homologous recombination. In the holoenzyme this subunit recognizes the wild-type Chi sequence, and when added to isolated RecB increases its ATP-dependent helicase processivity. This chain is RecBCD enzyme subunit RecC, found in Buchnera aphidicola subsp. Baizongia pistaciae (strain Bp).